Consider the following 466-residue polypeptide: Asparagine--tRNA ligase (466 aa).

It belongs to the class-II aminoacyl-tRNA synthetase family. As to quaternary structure, homodimer.

It localises to the cytoplasm. The catalysed reaction is tRNA(Asn) + L-asparagine + ATP = L-asparaginyl-tRNA(Asn) + AMP + diphosphate + H(+). The sequence is that of Asparagine--tRNA ligase from Syntrophobacter fumaroxidans (strain DSM 10017 / MPOB).